The chain runs to 236 residues: Ubiquinone biosynthesis O-methyltransferase (236 aa).

S-adenosyl-L-methionine contacts are provided by Arg-39, Gly-59, Asp-80, and Met-124.

This sequence belongs to the methyltransferase superfamily. UbiG/COQ3 family.

It carries out the reaction a 3-demethylubiquinol + S-adenosyl-L-methionine = a ubiquinol + S-adenosyl-L-homocysteine + H(+). It catalyses the reaction a 3-(all-trans-polyprenyl)benzene-1,2-diol + S-adenosyl-L-methionine = a 2-methoxy-6-(all-trans-polyprenyl)phenol + S-adenosyl-L-homocysteine + H(+). It functions in the pathway cofactor biosynthesis; ubiquinone biosynthesis. Functionally, O-methyltransferase that catalyzes the 2 O-methylation steps in the ubiquinone biosynthetic pathway. The polypeptide is Ubiquinone biosynthesis O-methyltransferase (Pseudoalteromonas translucida (strain TAC 125)).